The following is a 1577-amino-acid chain: Dynamin-binding protein (1577 aa).

Met-1 bears the N-acetylmethionine mark. 3 SH3 domains span residues Glu-2–Ile-61, Glu-66–Leu-126, and Tyr-145–Pro-204. A disordered region spans residues Asp-209–Gln-242. Over residues Thr-221–Gln-242 the composition is skewed to acidic residues. The region spanning Gln-243–Ser-302 is the SH3 4 domain. Disordered regions lie at residues Glu-307–Leu-361 and Gly-375–Cys-437. The segment covering Pro-400–Ser-410 has biased composition (polar residues). Position 494 is a phosphoserine (Ser-494). Disordered stretches follow at residues Pro-519 to Asp-547 and Arg-590 to Thr-681. The span at Thr-617 to Leu-626 shows a compositional bias: low complexity. Positions Lys-632–Thr-651 are enriched in pro residues. Residues Gln-652 to Pro-662 are compositionally biased toward polar residues. Basic and acidic residues predominate over residues Ala-672–Thr-681. The residue at position 684 (Ser-684) is a Phosphoserine. Residues Leu-705–Met-755 adopt a coiled-coil conformation. A DH domain is found at Lys-784 to Tyr-967. The BAR domain occupies Leu-1008–Leu-1217. The region spanning Pro-1285–Pro-1348 is the SH3 5 domain. A compositionally biased stretch (low complexity) spans Ser-1353 to His-1375. 2 disordered regions span residues Ser-1353 to Ser-1381 and Glu-1415 to Ser-1510. Composition is skewed to polar residues over residues Gly-1418–Thr-1428 and Asp-1484–Cys-1497. The SH3 6 domain occupies Glu-1513–Tyr-1576.

In terms of assembly, binds DNM1 via its N-terminal SH3 domains. The C-terminal SH3 domain binds a complex containing actin, tubulin, Hsp70 and actin-regulatory proteins, such as ENAH, EVL, WIRE, CR16, WAVE1 and NAP1L1. Interacts with FASLG. Interacts (via SH3 domain 6) with WASL. Interacts (via SH3 domain 6) interacts with ENAH. Interacts (via C-terminal domain) with TJP1; required for the apical cell-cell junction localization of DNMBP. As to expression, widely expressed.

It localises to the cytoplasm. It is found in the golgi apparatus. The protein resides in the golgi stack. The protein localises to the cytoskeleton. Its subcellular location is the synapse. It localises to the cell junction. In terms of biological role, plays a critical role as a guanine nucleotide exchange factor (GEF) for CDC42 in several intracellular processes associated with the actin and microtubule cytoskeleton. Regulates the structure of apical junctions in epithelial cells. Participates in the normal lumenogenesis of epithelial cell cysts by regulating spindle orientation. Plays a role in ciliogenesis. May play a role in membrane trafficking between the cell surface and the Golgi. This chain is Dynamin-binding protein, found in Rattus norvegicus (Rat).